Here is a 240-residue protein sequence, read N- to C-terminus: UDP-2,3-diacylglucosamine hydrolase (240 aa).

Mn(2+) is bound by residues aspartate 8, histidine 10, aspartate 41, asparagine 79, and histidine 114. 79–80 (NR) is a binding site for substrate. Residues aspartate 122, serine 160, asparagine 164, lysine 167, and histidine 195 each contribute to the substrate site. 2 residues coordinate Mn(2+): histidine 195 and histidine 197.

Belongs to the LpxH family. The cofactor is Mn(2+).

The protein localises to the cell inner membrane. The enzyme catalyses UDP-2-N,3-O-bis[(3R)-3-hydroxytetradecanoyl]-alpha-D-glucosamine + H2O = 2-N,3-O-bis[(3R)-3-hydroxytetradecanoyl]-alpha-D-glucosaminyl 1-phosphate + UMP + 2 H(+). It participates in glycolipid biosynthesis; lipid IV(A) biosynthesis; lipid IV(A) from (3R)-3-hydroxytetradecanoyl-[acyl-carrier-protein] and UDP-N-acetyl-alpha-D-glucosamine: step 4/6. Hydrolyzes the pyrophosphate bond of UDP-2,3-diacylglucosamine to yield 2,3-diacylglucosamine 1-phosphate (lipid X) and UMP by catalyzing the attack of water at the alpha-P atom. Involved in the biosynthesis of lipid A, a phosphorylated glycolipid that anchors the lipopolysaccharide to the outer membrane of the cell. This chain is UDP-2,3-diacylglucosamine hydrolase, found in Enterobacter sp. (strain 638).